Consider the following 177-residue polypeptide: Adenine phosphoribosyltransferase (177 aa).

The protein belongs to the purine/pyrimidine phosphoribosyltransferase family. Homodimer.

It is found in the cytoplasm. It carries out the reaction AMP + diphosphate = 5-phospho-alpha-D-ribose 1-diphosphate + adenine. The protein operates within purine metabolism; AMP biosynthesis via salvage pathway; AMP from adenine: step 1/1. In terms of biological role, catalyzes a salvage reaction resulting in the formation of AMP, that is energically less costly than de novo synthesis. This Mycoplasma pneumoniae (strain ATCC 29342 / M129 / Subtype 1) (Mycoplasmoides pneumoniae) protein is Adenine phosphoribosyltransferase.